Reading from the N-terminus, the 239-residue chain is MAMLRTDLEFSMLPQLGTRPVRWRFADGLVPYEEAVETMEREVALIADGGDELVWLVEHPPLYTAGTSANARDLVQPNRFPVFATGRGGEYTYHGPGQRVAYVMLDLKRRRQDVRAFVAALEDVVIRTLDMMNVRGERREDRVGVWVRRPEKPLLADGTMAEDKIAALGIRLRKWVTFHGLSLNVDPDLDHFGGIVPCGISAYGVTSLVDLGLPVMMADVDIRLRTAFEAVFGETTGEI.

The region spanning 48–236 (DGGDELVWLV…AFEAVFGETT (189 aa)) is the BPL/LPL catalytic domain. Substrate-binding positions include 87-94 (RGGEYTYH), 167-169 (ALG), and 180-182 (GLS). Cys-198 serves as the catalytic Acyl-thioester intermediate.

The protein belongs to the LipB family.

It is found in the cytoplasm. The catalysed reaction is octanoyl-[ACP] + L-lysyl-[protein] = N(6)-octanoyl-L-lysyl-[protein] + holo-[ACP] + H(+). Its pathway is protein modification; protein lipoylation via endogenous pathway; protein N(6)-(lipoyl)lysine from octanoyl-[acyl-carrier-protein]: step 1/2. Catalyzes the transfer of endogenously produced octanoic acid from octanoyl-acyl-carrier-protein onto the lipoyl domains of lipoate-dependent enzymes. Lipoyl-ACP can also act as a substrate although octanoyl-ACP is likely to be the physiological substrate. The polypeptide is Octanoyltransferase (Rhizobium johnstonii (strain DSM 114642 / LMG 32736 / 3841) (Rhizobium leguminosarum bv. viciae)).